The primary structure comprises 248 residues: UPF0246 protein lp_0089 (248 aa).

The protein belongs to the UPF0246 family.

The sequence is that of UPF0246 protein lp_0089 from Lactiplantibacillus plantarum (strain ATCC BAA-793 / NCIMB 8826 / WCFS1) (Lactobacillus plantarum).